A 642-amino-acid polypeptide reads, in one-letter code: 1,4-alpha-glucan branching enzyme GlgB (642 aa).

Asp304 (nucleophile) is an active-site residue. Glu355 (proton donor) is an active-site residue.

Belongs to the glycosyl hydrolase 13 family. GlgB subfamily. As to quaternary structure, monomer.

The catalysed reaction is Transfers a segment of a (1-&gt;4)-alpha-D-glucan chain to a primary hydroxy group in a similar glucan chain.. The protein operates within glycan biosynthesis; glycogen biosynthesis. In terms of biological role, catalyzes the formation of the alpha-1,6-glucosidic linkages in glycogen by scission of a 1,4-alpha-linked oligosaccharide from growing alpha-1,4-glucan chains and the subsequent attachment of the oligosaccharide to the alpha-1,6 position. The sequence is that of 1,4-alpha-glucan branching enzyme GlgB from Streptococcus pneumoniae serotype 2 (strain D39 / NCTC 7466).